Here is a 243-residue protein sequence, read N- to C-terminus: Adenosine 5'-phosphosulfate reductase (243 aa).

[4Fe-4S] cluster-binding residues include Cys126, Cys127, Cys209, and Cys212. Cys235 (nucleophile; cysteine thiosulfonate intermediate) is an active-site residue.

This sequence belongs to the PAPS reductase family. CysH subfamily. Requires [4Fe-4S] cluster as cofactor.

It is found in the cytoplasm. The catalysed reaction is [thioredoxin]-disulfide + sulfite + AMP + 2 H(+) = adenosine 5'-phosphosulfate + [thioredoxin]-dithiol. It participates in sulfur metabolism; hydrogen sulfide biosynthesis; sulfite from sulfate. In terms of biological role, catalyzes the formation of sulfite from adenosine 5'-phosphosulfate (APS) using thioredoxin as an electron donor. In Staphylococcus epidermidis (strain ATCC 12228 / FDA PCI 1200), this protein is Adenosine 5'-phosphosulfate reductase.